Reading from the N-terminus, the 409-residue chain is Iron(III) salmochelin esterase (409 aa).

The protein belongs to the Fes family.

It localises to the cytoplasm. The enzyme catalyses Fe(III)-C-5-deoxy-beta-D-glucosyl-enterobactin + H2O = Fe(III)-{di[N-(2,3-dihydroxybenzoyl)-L-seryl]-N-(C-5-[deoxy-beta-D-glucosyl]-2,3-dihydroxybenzoyl)-L-serine} + H(+). It carries out the reaction Fe(III)-{di[N-(2,3-dihydroxybenzoyl)-L-seryl]-N-(C-5-[deoxy-beta-D-glucosyl]-2,3-dihydroxybenzoyl)-L-serine} + H2O + H(+) = Fe(III)-{N-(2,3-dihydroxybenzoyl)-L-seryl-N-(C-5-[deoxy-beta-D-glucosyl]-2,3-dihydroxybenzoyl)-L-serine} + N-(2,3-dihydroxybenzoyl)-L-serine. It catalyses the reaction Fe(III)-{N-(2,3-dihydroxybenzoyl)-L-seryl-[N-(C-5-[deoxy-beta-D-glucosyl]-2,3-dihydroxybenzoyl)-L-serine]2} + H2O + H(+) = Fe(III)-{N-(2,3-dihydroxybenzoyl)-L-seryl-N-(C-5-[deoxy-beta-D-glucosyl]-2,3-dihydroxybenzoyl)-L-serine} + N-(C-5-[deoxy-beta-D-glucosyl]-2,3-dihydroxybenzoyl)-L-serine. The catalysed reaction is Fe(III)-di(C-5-deoxy-beta-D-glucosyl)-enterobactin + H2O = Fe(III)-{N-(2,3-dihydroxybenzoyl)-L-seryl-[N-(C-5-[deoxy-beta-D-glucosyl]-2,3-dihydroxybenzoyl)-L-serine]2} + H(+). The enzyme catalyses Fe(III)-{N-(2,3-dihydroxybenzoyl)-L-seryl-[N-(C-5-[deoxy-beta-D-glucosyl]-2,3-dihydroxybenzoyl)-L-serine]2} + H2O + H(+) = Fe(III)-[N-(C-5-[deoxy-beta-D-glucosyl]-2,3-dihydroxybenzoyl)-L-serine]2 + N-(2,3-dihydroxybenzoyl)-L-serine. It carries out the reaction Fe(III)-[N-(C-5-[deoxy-beta-D-glucosyl]-2,3-dihydroxybenzoyl)-L-serine]2 + H2O + H(+) = Fe(III)-[N-(C-5-[deoxy-beta-D-glucosyl]-2,3-dihydroxybenzoyl)-L-serine] + N-(C-5-[deoxy-beta-D-glucosyl]-2,3-dihydroxybenzoyl)-L-serine. Functionally, catalyzes the hydrolysis of both the apo and Fe3(+)-bound forms of enterobactin (Ent), monoglucosyl-C-Ent (MGE), diglucosyl-C-Ent (DGE) and triglucosyl-C-Ent (TGE). Shows higher catalytic efficiencies on Fe3(+)-bound forms. The initial linear trimer products are, in turn, very good substrates for further hydrolytic cleavage by IroD, leading to complete degradation of the trilactone to DHB-Ser and/or Glc-DHB-Ser monomers. Hydrolyzes MGE and DGE regioselectively. May be the ferric MGE/DGE esterase responsible for cytoplasmic iron release. This Escherichia coli O6:H1 (strain CFT073 / ATCC 700928 / UPEC) protein is Iron(III) salmochelin esterase.